The sequence spans 1048 residues: MGEIEQKPTPASRLGAPENSGISTLERGQKPPPTPSGKLMTVKIQMLDDTQEAFEVPQRAPGKVLFDAVCNHLNLVEGDYFGLEFPDHRKIVVWLDLLKPIVKQIRRPKHVVVKFVVKFFPPDHTQLQEELTRYLFALQVKQDLAQGRLTCNDTSAALLISHIVQSEIGDFDEALDREHLAKNKYVPQQDALEDRIMEFHHSHVGQTPAESDFQLLEVARRLEMYGIRLHPAKDREGTKINLAVANTGILVFQGFTKINAFNWAKVRKLSFKRKRFLIKLRPDVNSSYQDTLEFLMAGRDFCKSFWKICVEHHAFFRLFEEPKPKPKPVLFSRGSSFRFSGRTQKQVLDYVKEGGHKKVQFERKHSKIHSTRSLVSQPTAPNSEVPKQSPQSASLTFGEGTESPGGQSCQQAKETKACTLELGPHQSPALPKSPPGSKAADGTTVVPPEEEEEEEGGKDGIRPSNPQPPQPSTGSLTGSPHLSELSINSQGGAAPANVTLSPNLSPDNKQASPLISPLLNDQACPRTDDEEEGRRKRFPTDKAYYIAKEVSTTERTYLKDLEVIASWFQSTVSKEDSMPEALKSLIFPNFEPLHKFHTNFLKEIEQRLALWEGRSNAHVRGDYQRIGDVMLKNIQGMKHLAAHLWKHSEALEALETSIKGSRRLEHFCRDFELQKVCYLPLNTFLLRPLHRLMHYKHVLERLCKHHPPNHADFRDCRAALAEITEMVAQLHGTMIKMENFQKLHELKKDLIGIDNLVTPGREFIRLGSLSKLSGKGLQQRMFFLFNDVLLYTSRGLTASNQFKVHGQLPLYGMTIEESEEEWGVPHCLTLRGQRQSIIVAASSRSEMEKWMEDIQMAIDLAEKSNGPTPELLASSPPDNKSPDEATAADQESEDDLSASRTSLERQAPHRGNTMVHVCWHRSTSVSMVDFSIAVENQLSGNLLRKFKNSNGWQKLWVVFTNFCLFFYKSHQDSHPLASLPLLGYSLTIPSESENIHKDYVFKLHFKSHVYYFRAESEYTFERWMEVIRSATSSASRAHILSHKESHLY.

The segment at 1–37 is disordered; it reads MGEIEQKPTPASRLGAPENSGISTLERGQKPPPTPSG. Phosphoserine is present on residues serine 20 and serine 23. Position 24 is a phosphothreonine (threonine 24). Positions 40 to 320 constitute an FERM domain; the sequence is MTVKIQMLDD…EHHAFFRLFE (281 aa). Serine 340, serine 373, serine 389, serine 403, serine 427, serine 433, and serine 437 each carry phosphoserine. The disordered stretch occupies residues 361–536; sequence FERKHSKIHS…TDDEEEGRRK (176 aa). Over residues 371 to 395 the composition is skewed to polar residues; that stretch reads TRSLVSQPTAPNSEVPKQSPQSASL. Polar residues-rich tracts occupy residues 472 to 491 and 498 to 513; these read STGSLTGSPHLSELSINSQG and VTLSPNLSPDNKQASP. 2 positions are modified to phosphoserine: serine 512 and serine 516. The 192-residue stretch at 542–733 folds into the DH domain; sequence KAYYIAKEVS…TEMVAQLHGT (192 aa). The PH 1 domain occupies 762 to 859; that stretch reads EFIRLGSLSK…WMEDIQMAID (98 aa). Phosphoserine occurs at positions 836, 875, and 881. Positions 865–907 are disordered; sequence NGPTPELLASSPPDNKSPDEATAADQESEDDLSASRTSLERQA. Threonine 886 carries the post-translational modification Phosphothreonine. Phosphoserine occurs at positions 892, 899, and 902. The PH 2 domain maps to 935 to 1032; sequence ENQLSGNLLR…WMEVIRSATS (98 aa).

Interacts with CADM1. Interacts with RAC1. As to expression, detected in brain cortex, hippocampus, striatum, olfactory bulb, cerebellum and hindbrain (at protein level).

It is found in the cell membrane. It localises to the synapse. The protein localises to the synaptosome. The protein resides in the cytoplasm. Its subcellular location is the cytosol. It is found in the cell projection. It localises to the filopodium. The protein localises to the dendrite. The protein resides in the dendritic spine. Functionally, functions as a guanine nucleotide exchange factor for RAC1. May play a role in semaphorin signaling. Plays a role in the assembly and disassembly of dendritic filopodia, the formation of dendritic spines, regulation of dendrite length and ultimately the formation of synapses. The polypeptide is FERM, ARHGEF and pleckstrin domain-containing protein 1 (Farp1) (Mus musculus (Mouse)).